Consider the following 81-residue polypeptide: Putative defensin-like protein 26 (81 aa).

Residues 1 to 21 form the signal peptide; sequence MASLKVFSFALLIVLTFSVIG. Disulfide bonds link C33/C81 and C52/C77.

The protein belongs to the DEFL family.

It localises to the secreted. The polypeptide is Putative defensin-like protein 26 (Arabidopsis thaliana (Mouse-ear cress)).